Reading from the N-terminus, the 129-residue chain is Biogenesis of lysosome-related organelles complex 1 subunit CNL1 (129 aa).

This sequence belongs to the BLOC1S4 family. As to quaternary structure, component of the biogenesis of lysosome-related organelles complex-1 (BLOC-1).

It is found in the cytoplasm. Its function is as follows. Component of the biogenesis of lysosome-related organelles complex-1 (BLOC-1), a complex that is involved in endosomal cargo sorting. This Eremothecium gossypii (strain ATCC 10895 / CBS 109.51 / FGSC 9923 / NRRL Y-1056) (Yeast) protein is Biogenesis of lysosome-related organelles complex 1 subunit CNL1 (CLN1).